Reading from the N-terminus, the 410-residue chain is MQNKLASGARLGRQALLFPLCLVLYEFSTYIGNDMIQPGMLAVVEQYQAGIDWVPTSMTAYLAGGMFLQWLLGPLSDRIGRRPVMLAGVVWFIVTCLAILLAQNIEQFTLLRFLQGISLCFIGAVGYAAIQESFEEAVCIKITALMANVALIAPLLGPLVGAAWIHVLPWEGMFVLFAALAAISFFGLQRAMPETATRIGEKLSLKELGRDYKLVLKNGRFVAGALALGFVSLPLLAWIAQSPIIIITGEQLSSYEYGLLQVPIFGALIAGNLLLARLTSRRTVRSLIIMGGWPIMIGLLVAAAATVISSHAYLWMTAGLSIYAFGIGLANAGLVRLTLFASDMSKGTVSAAMGMLQMLIFTVGIEISKHAWLNGGNGLFNLFNLVNGILWLSLMVIFLKDKQMGNSHEG.

Over 1–15 the chain is Cytoplasmic; it reads MQNKLASGARLGRQA. The chain crosses the membrane as a helical span at residues 16–36; that stretch reads LLFPLCLVLYEFSTYIGNDMI. The Periplasmic segment spans residues 37 to 52; that stretch reads QPGMLAVVEQYQAGID. Residues 53–73 traverse the membrane as a helical segment; the sequence is WVPTSMTAYLAGGMFLQWLLG. The Cytoplasmic portion of the chain corresponds to 74–82; it reads PLSDRIGRR. A helical transmembrane segment spans residues 83–103; that stretch reads PVMLAGVVWFIVTCLAILLAQ. At 104–109 the chain is on the periplasmic side; that stretch reads NIEQFT. Residues 110-130 form a helical membrane-spanning segment; sequence LLRFLQGISLCFIGAVGYAAI. The Cytoplasmic segment spans residues 131–144; it reads QESFEEAVCIKITA. The chain crosses the membrane as a helical span at residues 145–165; it reads LMANVALIAPLLGPLVGAAWI. Position 166 (histidine 166) is a topological domain, periplasmic. A helical transmembrane segment spans residues 167–187; sequence VLPWEGMFVLFAALAAISFFG. Residues 188–226 are Cytoplasmic-facing; it reads LQRAMPETATRIGEKLSLKELGRDYKLVLKNGRFVAGAL. The chain crosses the membrane as a helical span at residues 227–247; it reads ALGFVSLPLLAWIAQSPIIII. The Periplasmic portion of the chain corresponds to 248–255; sequence TGEQLSSY. The chain crosses the membrane as a helical span at residues 256–276; it reads EYGLLQVPIFGALIAGNLLLA. Topologically, residues 277-287 are cytoplasmic; it reads RLTSRRTVRSL. Residues 288–308 traverse the membrane as a helical segment; that stretch reads IIMGGWPIMIGLLVAAAATVI. Topologically, residues 309–314 are periplasmic; sequence SSHAYL. Residues 315 to 335 traverse the membrane as a helical segment; that stretch reads WMTAGLSIYAFGIGLANAGLV. The Cytoplasmic portion of the chain corresponds to 336–346; it reads RLTLFASDMSK. A helical membrane pass occupies residues 347–367; the sequence is GTVSAAMGMLQMLIFTVGIEI. Residues 368 to 378 lie on the Periplasmic side of the membrane; the sequence is SKHAWLNGGNG. Residues 379 to 399 traverse the membrane as a helical segment; sequence LFNLFNLVNGILWLSLMVIFL. Residues 400 to 410 lie on the Cytoplasmic side of the membrane; the sequence is KDKQMGNSHEG.

This sequence belongs to the major facilitator superfamily. MdfA family. Monomer.

The protein localises to the cell inner membrane. In terms of biological role, efflux pump driven by the proton motive force. Confers resistance to a broad spectrum of chemically unrelated drugs. The chain is Multidrug transporter MdfA (mdfA) from Escherichia coli O6:H1 (strain CFT073 / ATCC 700928 / UPEC).